The chain runs to 193 residues: UPF0397 protein PA0141 (193 aa).

5 helical membrane-spanning segments follow: residues Val-11–Ile-31, Phe-43–Gly-63, Phe-69–Leu-89, Ile-109–Pro-129, and Gly-147–Ser-167.

Belongs to the UPF0397 family.

It is found in the cell membrane. The chain is UPF0397 protein PA0141 from Phytoplasma australiense.